The following is a 98-amino-acid chain: Protein translation factor SUI1 homolog (98 aa).

The protein belongs to the SUI1 family.

The polypeptide is Protein translation factor SUI1 homolog (Pyrococcus abyssi (strain GE5 / Orsay)).